A 384-amino-acid polypeptide reads, in one-letter code: Ribonucleoside-diphosphate reductase small chain (384 aa).

Fe cation-binding residues include Asp130, Glu161, and His164. Tyr168 is an active-site residue. Fe cation is bound by residues Glu224, Glu258, and His261.

Belongs to the ribonucleoside diphosphate reductase small chain family. As to quaternary structure, heterodimer of a large and a small subunit. Requires Fe cation as cofactor.

The catalysed reaction is a 2'-deoxyribonucleoside 5'-diphosphate + [thioredoxin]-disulfide + H2O = a ribonucleoside 5'-diphosphate + [thioredoxin]-dithiol. Provides the precursors necessary for DNA synthesis. Catalyzes the biosynthesis of deoxyribonucleotides from the corresponding ribonucleotides. In Spisula solidissima (Atlantic surf-clam), this protein is Ribonucleoside-diphosphate reductase small chain.